The following is a 157-amino-acid chain: Endoribonuclease YbeY (157 aa).

Zn(2+)-binding residues include His111, His115, and His121.

This sequence belongs to the endoribonuclease YbeY family. Zn(2+) is required as a cofactor.

The protein resides in the cytoplasm. Single strand-specific metallo-endoribonuclease involved in late-stage 70S ribosome quality control and in maturation of the 3' terminus of the 16S rRNA. This Pseudomonas putida (strain ATCC 47054 / DSM 6125 / CFBP 8728 / NCIMB 11950 / KT2440) protein is Endoribonuclease YbeY.